The following is a 620-amino-acid chain: UPF0313 protein BT_0254 (620 aa).

Residues 311 to 591 (AYDMIKFSVN…AQRQFFFWYK (281 aa)) form the Radical SAM core domain. Positions 325, 329, and 332 each coordinate [4Fe-4S] cluster.

The protein belongs to the UPF0313 family. [4Fe-4S] cluster is required as a cofactor.

This chain is UPF0313 protein BT_0254, found in Bacteroides thetaiotaomicron (strain ATCC 29148 / DSM 2079 / JCM 5827 / CCUG 10774 / NCTC 10582 / VPI-5482 / E50).